The sequence spans 511 residues: MSLRHEQLPQDVEQLSRMVLDLRAEVAYLKRLIHGARSEVLSTIDPTQTSLDLGDLSTVPVAANDDQPDGSRQSVRGRQSAARNIGFLPKHLPRYDVIIEPESRACACCSGALHRIGETTSEALDIVPAILRVKRTIRPRYACRACENGVMQAPAPARFMDGGMATTALAAHIVVSKFAWHLPLYRQAQIFAGYGITLDRGTLGIWGTRVAWWLKPLYDRLLAFIRSQPRVFSDETRLPRLDPGRKRTKVCQLWAQAVDDRPWKGPAPPAVGYIFSESRSAREAERQLASFNGVLQVDGYTAYKTLARHRGKSNSSPLRLAFCLAHARRKFVDVVKLTGSPEALEIVSILAEVYQIEREIRGQSAEDRQNARQLRSAPVMRQLKARLLDLKNDISTQSALAKAIKYTLAHWTGLNAFLDDGTIEVDSNIVERSMKSVALTRKNSMFVGNVQGGETFAVLASLINSAKLSGLDPYAWLADVLERIVSGSTTINQLETLLPWNWKADQVGQAA.

Residues 59-79 are disordered; sequence VPVAANDDQPDGSRQSVRGRQ.

It belongs to the transposase 25 family.

This is an uncharacterized protein from Sinorhizobium fredii (strain NBRC 101917 / NGR234).